A 210-amino-acid polypeptide reads, in one-letter code: Fibrillarin-like rRNA/tRNA 2'-O-methyltransferase (210 aa).

S-adenosyl-L-methionine contacts are provided by residues 70 to 71 (TT), 88 to 89 (EY), 113 to 114 (DA), and 133 to 136 (DIAQ).

The protein belongs to the methyltransferase superfamily. Fibrillarin family. Interacts with nop5. Component of box C/D small ribonucleoprotein (sRNP) particles that contain rpl7ae, FlpA and nop5, plus a guide RNA.

In terms of biological role, involved in pre-rRNA and tRNA processing. Utilizes the methyl donor S-adenosyl-L-methionine to catalyze the site-specific 2'-hydroxyl methylation of ribose moieties in rRNA and tRNA. Site specificity is provided by a guide RNA that base pairs with the substrate. Methylation occurs at a characteristic distance from the sequence involved in base pairing with the guide RNA. This chain is Fibrillarin-like rRNA/tRNA 2'-O-methyltransferase, found in Archaeoglobus fulgidus (strain ATCC 49558 / DSM 4304 / JCM 9628 / NBRC 100126 / VC-16).